Reading from the N-terminus, the 559-residue chain is Formate--tetrahydrofolate ligase (559 aa).

Residue 67–74 (TPAGEGKS) coordinates ATP.

This sequence belongs to the formate--tetrahydrofolate ligase family.

It catalyses the reaction (6S)-5,6,7,8-tetrahydrofolate + formate + ATP = (6R)-10-formyltetrahydrofolate + ADP + phosphate. It participates in one-carbon metabolism; tetrahydrofolate interconversion. This is Formate--tetrahydrofolate ligase from Lactobacillus delbrueckii subsp. bulgaricus (strain ATCC BAA-365 / Lb-18).